Here is a 696-residue protein sequence, read N- to C-terminus: Glycine--tRNA ligase beta subunit (696 aa).

It belongs to the class-II aminoacyl-tRNA synthetase family. In terms of assembly, tetramer of two alpha and two beta subunits.

It localises to the cytoplasm. It catalyses the reaction tRNA(Gly) + glycine + ATP = glycyl-tRNA(Gly) + AMP + diphosphate. This chain is Glycine--tRNA ligase beta subunit, found in Methylorubrum extorquens (strain CM4 / NCIMB 13688) (Methylobacterium extorquens).